Here is a 114-residue protein sequence, read N- to C-terminus: Large ribosomal subunit protein uL22 (114 aa).

Belongs to the universal ribosomal protein uL22 family. As to quaternary structure, part of the 50S ribosomal subunit.

In terms of biological role, this protein binds specifically to 23S rRNA; its binding is stimulated by other ribosomal proteins, e.g. L4, L17, and L20. It is important during the early stages of 50S assembly. It makes multiple contacts with different domains of the 23S rRNA in the assembled 50S subunit and ribosome. Functionally, the globular domain of the protein is located near the polypeptide exit tunnel on the outside of the subunit, while an extended beta-hairpin is found that lines the wall of the exit tunnel in the center of the 70S ribosome. The protein is Large ribosomal subunit protein uL22 of Desulfitobacterium hafniense (strain DSM 10664 / DCB-2).